A 570-amino-acid polypeptide reads, in one-letter code: MVIMVDKYEALQDLMRRRGFVWSSFEIYGGARGFYDYGPLGAIIKRKIEKKIREAFIREGFFEIETPDITPEEVFIASGHVDKFVDPLTECKKCGSRFRADHIVEEVLGIDTEGLSAEHLTQLIREHDIKCPECGGELADVWYFNLMFETYIGPYKDKKGYLRPETAQGIFVNFKRLNNFARNQLPFGVFQIGKAYRNEISPRQGMLRLREFSQAEVEIFFDPKQKEHPHFEEVKDEVLRFYPIENQLKNLGMIELTLDEAVKKGYVMNTFFAYYMAMVKRILLDIGIPANKIRFRQQLPEERAHYSSDTWDVEIHSERFGWIECVGIAYRGNYDLSRHVKESGADLTVMIHYKEPKIIKKLKISLNMKRVGPKLKGDAKRINQKLQEMTQEELKKIFEGLEKIGKVFLDGYELEKEDFIIKEVEEKVHGEKLVPHVLEPSFGIDRPFYLLLENSIVMDEDSRVYLKIKKDMAPIEVAVLPLVAKEPLTSIAYEIFRTLQKEGFIVVYDEKDTVGRRYARYDEIGTPYCVTIDNQTPEDNTVTIRDRDTREQIRVKIEELPEKLRELIFG.

Substrate is bound by residues R99 and E165. Residues 197–199 (RNE), 207–212 (LRLREF), 324–325 (EC), and 443–446 (GIDR) contribute to the ATP site. 212–216 (FSQAE) contacts substrate. Residue 439 to 443 (EPSFG) coordinates substrate.

The protein belongs to the class-II aminoacyl-tRNA synthetase family.

Its subcellular location is the cytoplasm. The catalysed reaction is tRNA(Gly) + glycine + ATP = glycyl-tRNA(Gly) + AMP + diphosphate. Its function is as follows. Catalyzes the attachment of glycine to tRNA(Gly). The sequence is that of Glycine--tRNA ligase from Thermococcus sibiricus (strain DSM 12597 / MM 739).